A 195-amino-acid chain; its full sequence is Dephospho-CoA kinase (195 aa).

In terms of domain architecture, DPCK spans 2–195 (IISLTGGIGV…DIVDSLNLNT (194 aa)). Residue 10–15 (GVGKSF) coordinates ATP.

The protein belongs to the CoaE family.

It is found in the cytoplasm. It carries out the reaction 3'-dephospho-CoA + ATP = ADP + CoA + H(+). The protein operates within cofactor biosynthesis; coenzyme A biosynthesis; CoA from (R)-pantothenate: step 5/5. Catalyzes the phosphorylation of the 3'-hydroxyl group of dephosphocoenzyme A to form coenzyme A. This chain is Dephospho-CoA kinase, found in Wolbachia pipientis wMel.